Reading from the N-terminus, the 692-residue chain is Ribosome-releasing factor 2, mitochondrial (692 aa).

The N-terminal 29 residues, 1–29 (MLKYAWQSGPKQRNRWLWHLSNQIWKRSY), are a transit peptide targeting the mitochondrion. One can recognise a tr-type G domain in the interval 31 to 310 (SKIRNIGILA…AVNAYLPAPE (280 aa)). Residues 40 to 47 (AHIDAGKT), 104 to 108 (DTPGH), and 158 to 161 (NKMD) each bind GTP.

This sequence belongs to the TRAFAC class translation factor GTPase superfamily. Classic translation factor GTPase family. EF-G/EF-2 subfamily.

It is found in the mitochondrion. Its function is as follows. Mitochondrial GTPase that mediates the disassembly of ribosomes from messenger RNA at the termination of mitochondrial protein biosynthesis. Not involved in the GTP-dependent ribosomal translocation step during translation elongation. The chain is Ribosome-releasing factor 2, mitochondrial from Drosophila sechellia (Fruit fly).